A 303-amino-acid chain; its full sequence is 2-dehydropantoate 2-reductase (303 aa).

Residues 7 to 12, N98, and A122 contribute to the NADP(+) site; that span reads GCGALG. Residue N98 coordinates substrate. K176 acts as the Proton donor in catalysis. Residues N180, N184, N194, and S244 each contribute to the substrate site. E256 is an NADP(+) binding site.

This sequence belongs to the ketopantoate reductase family.

The protein resides in the cytoplasm. It carries out the reaction (R)-pantoate + NADP(+) = 2-dehydropantoate + NADPH + H(+). It participates in cofactor biosynthesis; (R)-pantothenate biosynthesis; (R)-pantoate from 3-methyl-2-oxobutanoate: step 2/2. Its function is as follows. Catalyzes the NADPH-dependent reduction of ketopantoate into pantoic acid. This Yersinia pestis protein is 2-dehydropantoate 2-reductase (panE).